A 98-amino-acid chain; its full sequence is NADH-ubiquinone oxidoreductase chain 4L (98 aa).

3 helical membrane passes run 2–22, 26–46, and 59–79; these read SPAVLNITMAFTFSLLGTLMF, LMSTLLCLEGMMLSLFMLATI, and IPIAILVFAACEAAVGLALLA.

It belongs to the complex I subunit 4L family. As to quaternary structure, core subunit of respiratory chain NADH dehydrogenase (Complex I) which is composed of 45 different subunits.

Its subcellular location is the mitochondrion inner membrane. The catalysed reaction is a ubiquinone + NADH + 5 H(+)(in) = a ubiquinol + NAD(+) + 4 H(+)(out). In terms of biological role, core subunit of the mitochondrial membrane respiratory chain NADH dehydrogenase (Complex I) which catalyzes electron transfer from NADH through the respiratory chain, using ubiquinone as an electron acceptor. Part of the enzyme membrane arm which is embedded in the lipid bilayer and involved in proton translocation. The chain is NADH-ubiquinone oxidoreductase chain 4L (MT-ND4L) from Alexandromys kikuchii (Taiwan vole).